Consider the following 280-residue polypeptide: uncharacterized protein (280 aa).

3–29 contributes to the NADP(+) binding site; that stretch reads KKIAIVTGASSGFGLLAAVKLARSFFV. Ser-139 lines the substrate pocket. Catalysis depends on Tyr-152, which acts as the Proton acceptor.

Belongs to the short-chain dehydrogenases/reductases (SDR) family.

This is an uncharacterized protein from Bacillus subtilis (strain 168).